The following is a 77-amino-acid chain: Large ribosomal subunit protein uL24c (77 aa).

This sequence belongs to the universal ribosomal protein uL24 family. As to quaternary structure, part of the 50S ribosomal subunit.

The protein localises to the plastid. The protein resides in the chloroplast. Functionally, one of two assembly initiator proteins, it binds directly to the 5'-end of the 23S rRNA, where it nucleates assembly of the 50S subunit. In Thalassiosira pseudonana (Marine diatom), this protein is Large ribosomal subunit protein uL24c (rpl24).